Consider the following 451-residue polypeptide: Tubulin alpha chain (451 aa).

GTP is bound at residue Gln-11. Lys-40 bears the N6-acetyllysine mark. Residues Glu-71, Gly-144, Thr-145, Thr-179, Asn-206, and Asn-228 each coordinate GTP. A Mg(2+)-binding site is contributed by Glu-71. Glu-254 is an active-site residue.

Belongs to the tubulin family. Dimer of alpha and beta chains. A typical microtubule is a hollow water-filled tube with an outer diameter of 25 nm and an inner diameter of 15 nM. Alpha-beta heterodimers associate head-to-tail to form protofilaments running lengthwise along the microtubule wall with the beta-tubulin subunit facing the microtubule plus end conferring a structural polarity. Microtubules usually have 13 protofilaments but different protofilament numbers can be found in some organisms and specialized cells. It depends on Mg(2+) as a cofactor. Post-translationally, undergoes a tyrosination/detyrosination cycle, the cyclic removal and re-addition of a C-terminal tyrosine residue by the enzymes tubulin tyrosine carboxypeptidase (TTCP) and tubulin tyrosine ligase (TTL), respectively. Acetylation of alpha chains at Lys-40 stabilizes microtubules and affects affinity and processivity of microtubule motors. This modification has a role in multiple cellular functions, ranging from cell motility, cell cycle progression or cell differentiation to intracellular trafficking and signaling.

The protein resides in the cytoplasm. It localises to the cytoskeleton. The catalysed reaction is GTP + H2O = GDP + phosphate + H(+). In terms of biological role, tubulin is the major constituent of microtubules, a cylinder consisting of laterally associated linear protofilaments composed of alpha- and beta-tubulin heterodimers. Microtubules grow by the addition of GTP-tubulin dimers to the microtubule end, where a stabilizing cap forms. Below the cap, tubulin dimers are in GDP-bound state, owing to GTPase activity of alpha-tubulin. The protein is Tubulin alpha chain (TUBA) of Triticum aestivum (Wheat).